Consider the following 98-residue polypeptide: Aspartyl/glutamyl-tRNA(Asn/Gln) amidotransferase subunit C (98 aa).

The protein belongs to the GatC family. In terms of assembly, heterotrimer of A, B and C subunits.

It carries out the reaction L-glutamyl-tRNA(Gln) + L-glutamine + ATP + H2O = L-glutaminyl-tRNA(Gln) + L-glutamate + ADP + phosphate + H(+). The catalysed reaction is L-aspartyl-tRNA(Asn) + L-glutamine + ATP + H2O = L-asparaginyl-tRNA(Asn) + L-glutamate + ADP + phosphate + 2 H(+). Allows the formation of correctly charged Asn-tRNA(Asn) or Gln-tRNA(Gln) through the transamidation of misacylated Asp-tRNA(Asn) or Glu-tRNA(Gln) in organisms which lack either or both of asparaginyl-tRNA or glutaminyl-tRNA synthetases. The reaction takes place in the presence of glutamine and ATP through an activated phospho-Asp-tRNA(Asn) or phospho-Glu-tRNA(Gln). In Kocuria rhizophila (strain ATCC 9341 / DSM 348 / NBRC 103217 / DC2201), this protein is Aspartyl/glutamyl-tRNA(Asn/Gln) amidotransferase subunit C.